We begin with the raw amino-acid sequence, 685 residues long: Exocyst complex component 8 (685 aa).

The region spanning 151–251 (YLVYNGDLTE…WLEILEQTKK (101 aa)) is the PH domain. Over residues 254–263 (ALNEKQKQEE) the composition is skewed to basic and acidic residues. The interval 254–273 (ALNEKQKQEETTPQLPVVPE) is disordered.

Belongs to the EXO84 family. The exocyst complex is composed of exoc1, exoc2, exoc3, exoc4, exoc5, exoc6, exoc7 and exoc8.

The protein localises to the cytoplasm. The protein resides in the perinuclear region. Its subcellular location is the cell projection. It localises to the growth cone. Functionally, component of the exocyst complex involved in the docking of exocytic vesicles with fusion sites on the plasma membrane. This Xenopus laevis (African clawed frog) protein is Exocyst complex component 8 (exoc8).